The primary structure comprises 243 residues: Tyrosine recombinase XerD-like (243 aa).

The Core-binding (CB) domain occupies 1 to 72; it reads MKQAIESFIQ…AVNQFLYFLY (72 aa). Residues 91-243 enclose the Tyr recombinase domain; it reads SVKKKLERED…KTSMSLEKFR (153 aa). Active-site residues include Lys-149 and Arg-210.

It belongs to the 'phage' integrase family. XerD-like subfamily.

The protein resides in the cytoplasm. In terms of biological role, putative tyrosine recombinase. Not involved in the cutting and rejoining of the recombining DNA molecules on dif(SL) site. This chain is Tyrosine recombinase XerD-like, found in Streptococcus suis (strain 98HAH33).